The chain runs to 1379 residues: ABC multidrug transporter MDR2 (1379 aa).

Residues 65–85 (IALIVIGTIAGIGAGIPFPLL) form a helical membrane-spanning segment. Residues 69 to 367 (VIGTIAGIGA…MAPFMHIFAS (299 aa)) form the ABC transmembrane type-1 1 domain. N-linked (GlcNAc...) asparagine glycosylation occurs at Asn-97. The next 5 membrane-spanning stretches (helical) occupy residues 119 to 139 (VLQV…HTGC), 193 to 213 (KVGL…VAFL), 215 to 235 (VATI…MAFG), 301 to 321 (IQFG…FWQG), and 336 to 356 (VSVG…FVLS). In terms of domain architecture, ABC transporter 1 spans 403–682 (IELQDVTFNY…DGVYAGMVRL (280 aa)). ATP is bound at residue 438 to 445 (GTSGSGKS). 2 N-linked (GlcNAc...) asparagine glycosylation sites follow: Asn-552 and Asn-633. Residues 738-758 (YMPEEADSLPTEPENEKEKPK) are disordered. A run of 4 helical transmembrane segments spans residues 781 to 801 (LGLI…VIFG), 820 to 840 (GMLF…AVIV), 881 to 901 (LLVA…GTTI), and 920 to 942 (VIAW…SGVL). Positions 781–1068 (LGLITSIMIG…MFALVPDISK (288 aa)) constitute an ABC transmembrane type-1 2 domain. Asn-989 is a glycosylation site (N-linked (GlcNAc...) asparagine). 2 consecutive transmembrane segments (helical) span residues 1008–1028 (FWLS…YWWG) and 1032–1052 (ILAG…LLFS). The ABC transporter 2 domain occupies 1135 to 1374 (VQFRNVHFRY…CESYRANVIH (240 aa)). 1170–1177 (GPSGSGKS) contacts ATP.

This sequence belongs to the ABC transporter superfamily. ABCB family. Multidrug resistance exporter (TC 3.A.1.201) subfamily.

It localises to the cell membrane. Pleiotropic ABC efflux transporter that may be involved in the modulation susceptibility to a wide range of unrelated cytotoxic compounds. The protein is ABC multidrug transporter MDR2 of Trichophyton interdigitale (strain MR816).